The primary structure comprises 360 residues: Small ribosomal subunit protein bS1m (360 aa).

Low complexity predominate over residues 1-15 (MSSSNLSSILRNSRI). Residues 1–31 (MSSSNLSSILRNSRIAQVPKPKGPLFSPDKK) form a disordered region.

The protein belongs to the bacterial ribosomal protein bS1 family. Component of the mitochondrial small ribosomal subunit.

It localises to the mitochondrion. Functionally, involved in mitochondrial genome encoded proteins translation. This chain is Small ribosomal subunit protein bS1m (MRP51), found in Eremothecium gossypii (strain ATCC 10895 / CBS 109.51 / FGSC 9923 / NRRL Y-1056) (Yeast).